A 405-amino-acid chain; its full sequence is MAGRFFDNVMPDFVKEKESVSGGDTLRNLLAMPYSSLSQQLKRSALDLKETVVIETWGFSGQTVEDFTLYSGTLGAAFLLFRAYQVTGNANDLSLCLEIVKACDTASASSGDVTFLCGRAGVCGLGAVAAKLSGEEDLLNYYLGQFRLIRLSSDLPNELLYGRVGYLWACLFINKYIGKETLSSDTIREVAQEIIKEGRSMAKKGSSPLMFEWYGKRYWGAAHGLAGIMHVLMDVQLKPDEAEDVKGTLKYMIKNRFPSGNYPASEEDKKKDILVHWCHGAPGIALTLGKAAEVFGEREFLEASAAAAEVVWNRGLLKRVGICHGISGNAYVFLALYRATGRSEYLYRAKAFASFLLDRGPKLLSKGEMHGGDSPYSLFEGVAGMAYLFLDMVDPSEARFPGYEL.

Residues Cys-278, Cys-323, and His-324 each contribute to the Zn(2+) site.

The protein belongs to the LanC-like protein family.

Functionally, may play a role in signaling. May be not involved in abscisic acid (ABA) signaling. The polypeptide is LanC-like protein GCL2 (GCL2) (Arabidopsis thaliana (Mouse-ear cress)).